A 243-amino-acid polypeptide reads, in one-letter code: UDP-2,3-diacylglucosamine hydrolase (243 aa).

Mn(2+)-binding residues include Asp9, His11, Asp42, Asn79, and His114. 79-80 (NR) provides a ligand contact to substrate. Substrate is bound by residues Asp122, Ser160, Asn164, and His195. Positions 195 and 197 each coordinate Mn(2+).

The protein belongs to the LpxH family. Requires Mn(2+) as cofactor.

It is found in the cell inner membrane. It carries out the reaction UDP-2-N,3-O-bis[(3R)-3-hydroxytetradecanoyl]-alpha-D-glucosamine + H2O = 2-N,3-O-bis[(3R)-3-hydroxytetradecanoyl]-alpha-D-glucosaminyl 1-phosphate + UMP + 2 H(+). The protein operates within glycolipid biosynthesis; lipid IV(A) biosynthesis; lipid IV(A) from (3R)-3-hydroxytetradecanoyl-[acyl-carrier-protein] and UDP-N-acetyl-alpha-D-glucosamine: step 4/6. Its function is as follows. Hydrolyzes the pyrophosphate bond of UDP-2,3-diacylglucosamine to yield 2,3-diacylglucosamine 1-phosphate (lipid X) and UMP by catalyzing the attack of water at the alpha-P atom. Involved in the biosynthesis of lipid A, a phosphorylated glycolipid that anchors the lipopolysaccharide to the outer membrane of the cell. This chain is UDP-2,3-diacylglucosamine hydrolase, found in Coxiella burnetii (strain Dugway 5J108-111).